A 901-amino-acid chain; its full sequence is Bifunctional protein STORR (901 aa).

The chain crosses the membrane as a helical span at residues 12 to 32; sequence TSSVVALLLALVSILSSVVVL. C513 is a binding site for heme.

This sequence in the N-terminal section; belongs to the cytochrome P450 family. The protein in the C-terminal section; belongs to the aldo/keto reductase family. Heme serves as cofactor.

Its subcellular location is the membrane. The enzyme catalyses (R)-reticuline + NADP(+) = 1,2-dehydroreticuline + NADPH + H(+). It carries out the reaction (S)-reticuline + reduced [NADPH--hemoprotein reductase] + O2 = 1,2-dehydroreticuline + oxidized [NADPH--hemoprotein reductase] + 2 H2O + H(+). The protein operates within alkaloid biosynthesis; morphine biosynthesis. In terms of biological role, bifunctional protein involved in the biosynthesis of morphinan-type benzylisoquinoline alkaloids. Required for the isomerization of (S)- to (R)-reticuline. The cytochrome P450 module is responsible for the conversion of (S)-reticuline to 1,2-dehydroreticuline while the oxidoreductase module converts 1,2-dehydroreticuline to (R)-reticuline. The polypeptide is Bifunctional protein STORR (Papaver somniferum (Opium poppy)).